We begin with the raw amino-acid sequence, 395 residues long: uncharacterized protein (395 aa).

Residues 247 to 270 (GGTVVPPNPDQPNPTPPDSSSPNY) are disordered. Positions 252–265 (PPNPDQPNPTPPDS) are enriched in pro residues.

This is an uncharacterized protein from Vibrio cholerae serotype O1 (strain ATCC 39315 / El Tor Inaba N16961).